A 697-amino-acid chain; its full sequence is uncharacterized protein (697 aa).

Positions 516-545 (ADQSQNDVVALSSRIDRLTQEVVALQNSEK) form a coiled coil.

This is an uncharacterized protein from Callospermophilus lateralis (Golden-mantled ground squirrel).